We begin with the raw amino-acid sequence, 498 residues long: tRNA-guanine(15) transglycosylase (498 aa).

The active-site Nucleophile is the Asp85. Asp120 contacts substrate. Cys275, Cys277, and Cys280 together coordinate Zn(2+).

This sequence belongs to the archaeosine tRNA-ribosyltransferase family. Zn(2+) is required as a cofactor.

The catalysed reaction is guanosine(15) in tRNA + 7-cyano-7-deazaguanine = 7-cyano-7-carbaguanosine(15) in tRNA + guanine. Its pathway is tRNA modification; archaeosine-tRNA biosynthesis. Exchanges the guanine residue with 7-cyano-7-deazaguanine (preQ0) at position 15 in the dihydrouridine loop (D-loop) of archaeal tRNAs. In Sulfolobus acidocaldarius (strain ATCC 33909 / DSM 639 / JCM 8929 / NBRC 15157 / NCIMB 11770), this protein is tRNA-guanine(15) transglycosylase.